A 465-amino-acid chain; its full sequence is MATTRSEKDSMGSIDVPANQLWGAQTQRSLAHFRISQEKMPTELIHALALTKRAAAQVNMDLGLLPAERAKAIMRAADEVLDGAHPTEFPLAIWQTGSGTQTNMNMNEVLANRASELLGGARGNNRLVHPNDDVNKSQSSNDVFPTAMHVAAVMGVSEHLLPELKVLQKTLADKAEAYRDIVKIGRTHLQDATPLTLGQEISGWAAMLSHSVRHIEATLPHLCELALGGTAVGTGLNTHPEYAVRVANEIATLTRQPFITAPNKFESLGTCDALVHGHGALKGLAASLMKIANDVRWLSSGPRCGIGEISIPENEPGSSIMPGKVNPTQCEAMTMLCAQVMGNDVAINIGGASGNFELNVFRPLVIHNFLQSVRLLADGMRGFNEHCALGIEPNRDRITQLLNESLMLVTALNTHIGYDKAAEIAKKAHKEGLTLKAAAMALGYLTDAEFDEWVRPEDMVGSMKK.

Residues 98 to 100 (SGT), R126, 129 to 132 (HPND), 139 to 141 (SSN), and T187 each bind substrate. The active-site Proton donor/acceptor is the H188. Residue S318 is part of the active site. Substrate is bound by residues S319 and 324-326 (KVN).

The protein belongs to the class-II fumarase/aspartase family. Fumarase subfamily. As to quaternary structure, homotetramer.

It is found in the cytoplasm. The catalysed reaction is (S)-malate = fumarate + H2O. It functions in the pathway carbohydrate metabolism; tricarboxylic acid cycle; (S)-malate from fumarate: step 1/1. Functionally, involved in the TCA cycle. Catalyzes the stereospecific interconversion of fumarate to L-malate. The sequence is that of Fumarate hydratase class II from Yersinia pestis.